Here is a 131-residue protein sequence, read N- to C-terminus: Sec-independent protein translocase protein TatB (131 aa).

Residues 2–22 (FDGIGFMELLLIGIVGLVVLG) traverse the membrane as a helical segment. The segment covering 86–95 (LKEAAQSVNR) has biased composition (polar residues). The disordered stretch occupies residues 86–131 (LKEAAQSVNRPYQVEDVPAAKDVPAKEMPTSETSTATNANSDKPNG). The segment covering 115-131 (TSETSTATNANSDKPNG) has biased composition (low complexity).

The protein belongs to the TatB family. As to quaternary structure, the Tat system comprises two distinct complexes: a TatABC complex, containing multiple copies of TatA, TatB and TatC subunits, and a separate TatA complex, containing only TatA subunits. Substrates initially bind to the TatABC complex, which probably triggers association of the separate TatA complex to form the active translocon.

Its subcellular location is the cell inner membrane. In terms of biological role, part of the twin-arginine translocation (Tat) system that transports large folded proteins containing a characteristic twin-arginine motif in their signal peptide across membranes. Together with TatC, TatB is part of a receptor directly interacting with Tat signal peptides. TatB may form an oligomeric binding site that transiently accommodates folded Tat precursor proteins before their translocation. In Shewanella halifaxensis (strain HAW-EB4), this protein is Sec-independent protein translocase protein TatB.